Here is a 146-residue protein sequence, read N- to C-terminus: Hemoglobin subunit beta-2 (146 aa).

The Globin domain maps to 2–146 (GLTAHEKQLI…IADALGKGYH (145 aa)). Residues His63 and His92 each coordinate heme b.

The protein belongs to the globin family. As to quaternary structure, heterotetramer of two alpha chains and two beta chains. Red blood cells.

Involved in oxygen transport from the lung to the various peripheral tissues. This chain is Hemoglobin subunit beta-2 (hbb2), found in Xenopus borealis (Kenyan clawed frog).